We begin with the raw amino-acid sequence, 251 residues long: ATP synthase delta chain, chloroplastic (251 aa).

A chloroplast-targeting transit peptide spans 1-64; that stretch reads MASLQHTTAS…STGGALGARM (64 aa).

The protein belongs to the ATPase delta chain family. In terms of assembly, F-type ATPases have 2 components, CF(1) - the catalytic core - and CF(0) - the membrane proton channel. CF(1) has five subunits: alpha(3), beta(3), gamma(1), delta(1), epsilon(1). CF(0) has three main subunits: a, b and c.

It is found in the plastid. The protein localises to the chloroplast thylakoid membrane. In terms of biological role, this protein seems to be part of the stalk that links CF(0) to CF(1). It either transmits conformational changes from CF(0) into CF(1) or is implicated in proton conduction. The protein is ATP synthase delta chain, chloroplastic (ATPD) of Pisum sativum (Garden pea).